Here is a 265-residue protein sequence, read N- to C-terminus: Transmembrane protein 270 (265 aa).

3 consecutive transmembrane segments (helical) span residues 72–92 (PLGQALWAGLALIQVPVWLVL), 130–150 (LFLSCLHGLMLVALLLVVVTW), and 185–205 (LYWWVETMTALTSWHLAYLIT). The segment at 229–265 (QEVEPQEVSGSSLLPSLSASSDSESGTVLPEQETPRE) is disordered. Residues 237–253 (SGSSLLPSLSASSDSES) show a composition bias toward low complexity.

It is found in the membrane. The sequence is that of Transmembrane protein 270 from Homo sapiens (Human).